The sequence spans 186 residues: MYEYSVLAAESGEDVNPLIPATYDIVWSVVCVAIIAVVFYKYVIPRLTKVLNERADKIEGGIAKAEAAQAEAQQTLEQYQQQLADARLEAARIREDARTQGQQILAQMRAEAQAESDRIVAAGHAQLEAQRQQILTELRSEVGRTAVDLAEKIIGQSVSDEAKQAASIERFLSELDSSDAGIGVGR.

A helical transmembrane segment spans residues 25-45; it reads IVWSVVCVAIIAVVFYKYVIP.

Belongs to the ATPase B chain family. In terms of assembly, F-type ATPases have 2 components, F(1) - the catalytic core - and F(0) - the membrane proton channel. F(1) has five subunits: alpha(3), beta(3), gamma(1), delta(1), epsilon(1). F(0) has three main subunits: a(1), b(2) and c(10-14). The alpha and beta chains form an alternating ring which encloses part of the gamma chain. F(1) is attached to F(0) by a central stalk formed by the gamma and epsilon chains, while a peripheral stalk is formed by the delta and b chains.

It is found in the cell membrane. In terms of biological role, f(1)F(0) ATP synthase produces ATP from ADP in the presence of a proton or sodium gradient. F-type ATPases consist of two structural domains, F(1) containing the extramembraneous catalytic core and F(0) containing the membrane proton channel, linked together by a central stalk and a peripheral stalk. During catalysis, ATP synthesis in the catalytic domain of F(1) is coupled via a rotary mechanism of the central stalk subunits to proton translocation. Its function is as follows. Component of the F(0) channel, it forms part of the peripheral stalk, linking F(1) to F(0). In Nocardia farcinica (strain IFM 10152), this protein is ATP synthase subunit b.